Here is a 405-residue protein sequence, read N- to C-terminus: Na(+)-translocating NADH-quinone reductase subunit F (405 aa).

A helical transmembrane segment spans residues 3-23; the sequence is IILGIVMFTVIVLALALMILF. In terms of domain architecture, 2Fe-2S ferredoxin-type spans 32-124; that stretch reads GDITIKVNDE…DMDIEVPEEV (93 aa). Positions 67, 73, 76, and 108 each coordinate [2Fe-2S] cluster. One can recognise an FAD-binding FR-type domain in the interval 127–267; that stretch reads VKKWECTVIS…SGPFGEFFAK (141 aa).

This sequence belongs to the NqrF family. Composed of six subunits; NqrA, NqrB, NqrC, NqrD, NqrE and NqrF. The cofactor is [2Fe-2S] cluster. FAD serves as cofactor.

Its subcellular location is the cell inner membrane. It catalyses the reaction a ubiquinone + n Na(+)(in) + NADH + H(+) = a ubiquinol + n Na(+)(out) + NAD(+). Its function is as follows. NQR complex catalyzes the reduction of ubiquinone-1 to ubiquinol by two successive reactions, coupled with the transport of Na(+) ions from the cytoplasm to the periplasm. The first step is catalyzed by NqrF, which accepts electrons from NADH and reduces ubiquinone-1 to ubisemiquinone by a one-electron transfer pathway. This Neisseria gonorrhoeae (strain ATCC 700825 / FA 1090) protein is Na(+)-translocating NADH-quinone reductase subunit F.